A 259-amino-acid chain; its full sequence is ATP synthase subunit a (259 aa).

A run of 5 helical transmembrane segments spans residues 29–49, 89–109, 132–154, 209–229, and 230–250; these read TVNIDSMVFSVVLGTLFIWLF, LIAPLALTIFVWIFLMNAMDL, SADVNITLSMALGVFFLILFYSI, IFILIAAMLPWWSQWFLNVPW, and AIFHILIITLQAFIFMVLTIV.

Belongs to the ATPase A chain family. As to quaternary structure, F-type ATPases have 2 components, CF(1) - the catalytic core - and CF(0) - the membrane proton channel. CF(1) has five subunits: alpha(3), beta(3), gamma(1), delta(1), epsilon(1). CF(0) has three main subunits: a(1), b(2) and c(9-12). The alpha and beta chains form an alternating ring which encloses part of the gamma chain. CF(1) is attached to CF(0) by a central stalk formed by the gamma and epsilon chains, while a peripheral stalk is formed by the delta and b chains.

Its subcellular location is the cell inner membrane. In terms of biological role, key component of the proton channel; it plays a direct role in the translocation of protons across the membrane. The sequence is that of ATP synthase subunit a from Tolumonas auensis (strain DSM 9187 / NBRC 110442 / TA 4).